The following is a 135-amino-acid chain: MPTIQQLIREERKAAVRKTKAPALKGCPQRRGVCTRVYTTTPKKPNSALRKVARVRLTSGFEVTAYIPGIGHNLQEHSVVMIRGGRVKDLPGVRYHIIRGTLDAAGVKDRKQGRSKYGAKRPKPGQAPAAAGKKK.

The residue at position 89 (D89) is a 3-methylthioaspartic acid. Residues 106–135 (GVKDRKQGRSKYGAKRPKPGQAPAAAGKKK) form a disordered region. Positions 113–123 (GRSKYGAKRPK) are enriched in basic residues. Residues 124–135 (PGQAPAAAGKKK) show a composition bias toward low complexity.

Belongs to the universal ribosomal protein uS12 family. As to quaternary structure, part of the 30S ribosomal subunit. Contacts proteins S8 and S17. May interact with IF1 in the 30S initiation complex.

With S4 and S5 plays an important role in translational accuracy. Functionally, interacts with and stabilizes bases of the 16S rRNA that are involved in tRNA selection in the A site and with the mRNA backbone. Located at the interface of the 30S and 50S subunits, it traverses the body of the 30S subunit contacting proteins on the other side and probably holding the rRNA structure together. The combined cluster of proteins S8, S12 and S17 appears to hold together the shoulder and platform of the 30S subunit. In Synechococcus sp. (strain JA-3-3Ab) (Cyanobacteria bacterium Yellowstone A-Prime), this protein is Small ribosomal subunit protein uS12.